We begin with the raw amino-acid sequence, 78 residues long: NAD(P)H-quinone oxidoreductase subunit L (78 aa).

2 helical membrane-spanning segments follow: residues 10-30 (IILI…PAIV) and 47-67 (VFMY…SPFL).

This sequence belongs to the complex I NdhL subunit family. In terms of assembly, NDH-1 can be composed of about 15 different subunits; different subcomplexes with different compositions have been identified which probably have different functions.

It localises to the cellular thylakoid membrane. The enzyme catalyses a plastoquinone + NADH + (n+1) H(+)(in) = a plastoquinol + NAD(+) + n H(+)(out). The catalysed reaction is a plastoquinone + NADPH + (n+1) H(+)(in) = a plastoquinol + NADP(+) + n H(+)(out). Its function is as follows. NDH-1 shuttles electrons from an unknown electron donor, via FMN and iron-sulfur (Fe-S) centers, to quinones in the respiratory and/or the photosynthetic chain. The immediate electron acceptor for the enzyme in this species is believed to be plastoquinone. Couples the redox reaction to proton translocation, and thus conserves the redox energy in a proton gradient. Cyanobacterial NDH-1 also plays a role in inorganic carbon-concentration. The chain is NAD(P)H-quinone oxidoreductase subunit L from Trichodesmium erythraeum (strain IMS101).